Reading from the N-terminus, the 886-residue chain is Leucine--tRNA ligase (886 aa).

The 'HIGH' region motif lies at 51 to 61; the sequence is PYPSGRIHMGH. Residues 644 to 648 carry the 'KMSKS' region motif; sequence KMSKS. Lys-647 provides a ligand contact to ATP.

The protein belongs to the class-I aminoacyl-tRNA synthetase family.

The protein resides in the cytoplasm. It catalyses the reaction tRNA(Leu) + L-leucine + ATP = L-leucyl-tRNA(Leu) + AMP + diphosphate. This Bartonella tribocorum (strain CIP 105476 / IBS 506) protein is Leucine--tRNA ligase.